The primary structure comprises 368 residues: DNA replication and repair protein RecF (368 aa).

30-37 (GNNAQGKT) contributes to the ATP binding site.

The protein belongs to the RecF family.

It localises to the cytoplasm. Its function is as follows. The RecF protein is involved in DNA metabolism; it is required for DNA replication and normal SOS inducibility. RecF binds preferentially to single-stranded, linear DNA. It also seems to bind ATP. This Streptococcus pyogenes serotype M49 (strain NZ131) protein is DNA replication and repair protein RecF.